The primary structure comprises 350 residues: Ribosomal RNA large subunit methyltransferase M (350 aa).

S-adenosyl-L-methionine is bound by residues serine 184, alanine 217–glycine 220, aspartate 236, aspartate 256, and aspartate 272. Lysine 301 serves as the catalytic Proton acceptor.

The protein belongs to the class I-like SAM-binding methyltransferase superfamily. RNA methyltransferase RlmE family. RlmM subfamily. Monomer.

The protein localises to the cytoplasm. The enzyme catalyses cytidine(2498) in 23S rRNA + S-adenosyl-L-methionine = 2'-O-methylcytidine(2498) in 23S rRNA + S-adenosyl-L-homocysteine + H(+). Its function is as follows. Catalyzes the 2'-O-methylation at nucleotide C2498 in 23S rRNA. This is Ribosomal RNA large subunit methyltransferase M from Marinomonas sp. (strain MWYL1).